A 131-amino-acid chain; its full sequence is uncharacterized protein (131 aa).

Transmembrane regions (helical) follow at residues 52-72 (LIMIGIIELSYFISLGGFYLV) and 97-117 (SDIISIFCSIAFVLFCIYDVG).

Its subcellular location is the membrane. This is an uncharacterized protein from Acanthamoeba polyphaga mimivirus (APMV).